The sequence spans 590 residues: Aspartate--tRNA(Asp/Asn) ligase (590 aa).

Glu-175 is a binding site for L-aspartate. The interval 199-202 (QQYK) is aspartate. Arg-221 and His-450 together coordinate L-aspartate. 221 to 223 (RDE) provides a ligand contact to ATP. Glu-484 lines the ATP pocket. Arg-491 provides a ligand contact to L-aspartate. Residue 536–539 (GVDR) participates in ATP binding.

It belongs to the class-II aminoacyl-tRNA synthetase family. Type 1 subfamily. As to quaternary structure, homodimer.

The protein localises to the cytoplasm. The catalysed reaction is tRNA(Asx) + L-aspartate + ATP = L-aspartyl-tRNA(Asx) + AMP + diphosphate. Functionally, aspartyl-tRNA synthetase with relaxed tRNA specificity since it is able to aspartylate not only its cognate tRNA(Asp) but also tRNA(Asn). Reaction proceeds in two steps: L-aspartate is first activated by ATP to form Asp-AMP and then transferred to the acceptor end of tRNA(Asp/Asn). In Nitrobacter winogradskyi (strain ATCC 25391 / DSM 10237 / CIP 104748 / NCIMB 11846 / Nb-255), this protein is Aspartate--tRNA(Asp/Asn) ligase.